A 316-amino-acid chain; its full sequence is SWR complex protein 2 (316 aa).

3 disordered regions span residues 1–81 (MSAT…GEEV), 93–127 (KRKIQKNRAANLQRTLQPPKRPTPSAASEVPKKKY), and 153–180 (ETRLQEAKPRRKYTVSASANRQKGTMTQ). The segment covering 20–31 (KMRELLEKEHLR) has biased composition (basic and acidic residues). Residues 20–95 (KMRELLEKEH…RDEERIKKRK (76 aa)) are a coiled coil. A compositionally biased stretch (acidic residues) spans 40 to 56 (EKEDEEYNIEEEEEAER). 2 positions are modified to phosphoserine: Ser64 and Ser65. Positions 70–81 (ELKKLEEEGEEV) are enriched in basic and acidic residues. Polar residues predominate over residues 167 to 180 (VSASANRQKGTMTQ).

Belongs to the VPS72/YL1 family. Component of the SWR1 chromatin-remodeling complex.

The protein localises to the nucleus. Its function is as follows. Participates in the catalytic exchange of histone H2A for the H2A variant pht1, an euchromatin-specific factor, leading to chromatin remodeling and changes in transcription of targeted genes. The sequence is that of SWR complex protein 2 (swc2) from Schizosaccharomyces pombe (strain 972 / ATCC 24843) (Fission yeast).